Reading from the N-terminus, the 363-residue chain is Ribonuclease P protein subunit p40 (363 aa).

In terms of assembly, component of nuclear RNase P and RNase MRP ribonucleoproteins. RNase P consists of a catalytic RNA moiety and about 10 protein subunits; POP1, POP4, POP5, POP7, RPP14, RPP21, RPP25, RPP30, RPP38 and RPP40. Within the RNase P complex, POP1, POP7 and RPP25 form the 'finger' subcomplex, POP5, RPP14, RPP40 and homodimeric RPP30 form the 'palm' subcomplex, and RPP21, POP4 and RPP38 form the 'wrist' subcomplex. All subunits of the RNase P complex interact with the catalytic RNA. Several subunits of RNase P are also part of the RNase MRP complex. RNase MRP consists of a catalytic RNA moiety and about 8 protein subunits; POP1, POP7, RPP25, RPP30, RPP38, RPP40 and possibly also POP4 and POP5.

Its subcellular location is the nucleus. It is found in the nucleolus. Functionally, component of ribonuclease P, a ribonucleoprotein complex that generates mature tRNA molecules by cleaving their 5'-ends. Also a component of the MRP ribonuclease complex, which cleaves pre-rRNA sequences. This is Ribonuclease P protein subunit p40 (Rpp40) from Rattus norvegicus (Rat).